A 614-amino-acid chain; its full sequence is Vitamin B12 transporter BtuB (614 aa).

Residues 1–20 (MIKKASLLTACSVTAFSAWA) form the signal peptide. At 21–157 (QDTSPDTLVV…NIITTRDEPG (137 aa)) the chain is on the periplasmic side. The TonB box motif lies at 26-33 (DTLVVTAN). Positions 38-152 (PRSTVLAPTT…IGGVVNIITT (115 aa)) constitute a TBDR plug domain. Residues Leu83, Ser85, Asn92, and 110–111 (VS) each bind cyanocob(III)alamin. The 460-residue stretch at 155-614 (EPGTEISAGW…EYTLSGSYTF (460 aa)) folds into the TBDR beta-barrel domain. The beta stranded transmembrane segment at 158 to 165 (TEISAGWG) threads the bilayer. Over 166–168 (SNS) the chain is Extracellular. Residues 169–178 (YQNYDVSTQQ) traverse the membrane as a beta stranded segment. The Periplasmic portion of the chain corresponds to 179 to 183 (QLGDK). The chain crosses the membrane as a beta stranded span at residues 184-195 (TRVTLLGDYAHT). Over 196–216 (HGYDVVAYGNTGTQAQTDNDG) the chain is Extracellular. Ca(2+) is bound by residues Asp199, Gln211, Asp213, and Asp215. A beta stranded membrane pass occupies residues 217–227 (FLSKTLYGALE). The Periplasmic portion of the chain corresponds to 228-231 (HNFT). The beta stranded transmembrane segment at 232–248 (DAWSGFVRGYGYDNRTN) threads the bilayer. Positions 249 and 250 each coordinate Ca(2+). At 249 to 262 (YDAYYSPGSPLLDT) the chain is on the extracellular side. A cyanocob(III)alamin-binding site is contributed by Ala251. Asp261 serves as a coordination point for Ca(2+). The chain crosses the membrane as a beta stranded span at residues 263–277 (RKLYSQSWDAGLRYN). Residue Gly278 is a topological domain, periplasmic. A beta stranded membrane pass occupies residues 279 to 296 (ELIKSQLITSYSHSKDYN). Over 297 to 308 (YDPHYGRYDSSA) the chain is Extracellular. A cyanocob(III)alamin-binding site is contributed by Thr309. The chain crosses the membrane as a beta stranded span at residues 309-325 (TLDEMKQYTVQWANNVI). At 326–327 (VG) the chain is on the periplasmic side. The beta stranded transmembrane segment at 328–337 (HGSIGAGVDW) threads the bilayer. At 338–352 (QKQTTTPGTGYVEDG) the chain is on the extracellular side. A beta stranded membrane pass occupies residues 353–369 (YDQRNTGIYLTGLQQVG). Position 370 (Asp370) is a topological domain, periplasmic. Residues 371–381 (FTFEGAARSDD) form a beta stranded membrane-spanning segment. At 382 to 384 (NSQ) the chain is on the extracellular side. A beta stranded membrane pass occupies residues 385 to 400 (FGRHGTWQTSAGWEFI). Topologically, residues 401-402 (EG) are periplasmic. The chain crosses the membrane as a beta stranded span at residues 403-417 (YRFIASYGTSYKAPN). The Extracellular portion of the chain corresponds to 418-433 (LGQLYGFYGNPNLDPE). Residues 434–443 (KSKQWEGAFE) traverse the membrane as a beta stranded segment. Residues 444-448 (GLTAG) lie on the Periplasmic side of the membrane. A beta stranded membrane pass occupies residues 449 to 458 (VNWRISGYRN). The Extracellular segment spans residues 459–472 (DVSDLIDYDDHTLK). The beta stranded transmembrane segment at 473-490 (YYNEGKARIKGVEATANF) threads the bilayer. The Periplasmic portion of the chain corresponds to 491–493 (DTG). A beta stranded transmembrane segment spans residues 494 to 509 (PLTHTVSYDYVDARNA). The Extracellular portion of the chain corresponds to 510-516 (ITDTPLL). Position 517 (Arg517) interacts with cyanocob(III)alamin. The chain crosses the membrane as a beta stranded span at residues 517–529 (RRAKQQVKYQLDW). Topologically, residues 530 to 534 (QLYDF) are periplasmic. A beta stranded membrane pass occupies residues 535 to 550 (DWGITYQYLGTRYDKD). Tyr551 is a binding site for cyanocob(III)alamin. Over 551–557 (YSSYPYQ) the chain is Extracellular. Residues 558-572 (TVKMGGVSLWDLAVA) form a beta stranded membrane-spanning segment. The Periplasmic portion of the chain corresponds to 573–584 (YPVTSHLTVRGK). Residues 585–596 (IANLFDKDYETV) form a beta stranded membrane-spanning segment. The Extracellular portion of the chain corresponds to 597–601 (YGYQT). The TonB C-terminal box signature appears at 597 to 614 (YGYQTAGREYTLSGSYTF). The beta stranded transmembrane segment at 602–614 (AGREYTLSGSYTF) threads the bilayer.

Belongs to the TonB-dependent receptor family. BtuB (TC 1.B.14.3.1) subfamily. In terms of assembly, interacts with TonB. As to quaternary structure, (Microbial infection) The hairpin motif of the receptor-binding domain of colicin E3 (ColE3) interacts with BtuB without displacing BtuB's central plug. An N-terminal fragment of E3 binds OmpF; trimeric complexes with ColE3, BtuB and OmpF can be cross-linked and immunoprecipitated.

Its subcellular location is the cell outer membrane. With respect to regulation, calcium increases vitamin B12 binding affinity by a factor of 50-100. (Microbial infection) Colicins E1, E3 and K inhibit cyanocobalamin (CN-B12) uptake; E1 and E3 inhibit binding of CN-B12 to cells while colicin K inhibits a later, energy-dependent step of CN-B12. In terms of biological role, involved in the active translocation of vitamin B12 (cyanocobalamin) across the outer membrane to the periplasmic space. It derives its energy for transport by interacting with the trans-periplasmic membrane protein TonB. Functionally, (Microbial infection) Acts as a receptor for bacteriophages BF23 and C1, and for A and E colicins. Cyanocobalamin (CN-B12) in solid medium protects against colicins E1 and E3. Does not act as the translocon for colicin E3 (ColE3). The translocon is OmpF; trimeric complexes with ColE3, BtuB and OmpF can be cross-linked and immunoprecipitated. This chain is Vitamin B12 transporter BtuB, found in Escherichia coli (strain K12).